A 32-amino-acid chain; its full sequence is Cytochrome b6-f complex subunit 7 (32 aa).

Residues 9 to 27 (AALFWVLIPLGLAGGALLL) form a helical membrane-spanning segment.

Belongs to the PetM family. As to quaternary structure, the 4 large subunits of the cytochrome b6-f complex are cytochrome b6, subunit IV (17 kDa polypeptide, PetD), cytochrome f and the Rieske protein, while the 4 small subunits are PetG, PetL, PetM and PetN. The complex functions as a dimer.

Its subcellular location is the cellular thylakoid membrane. In terms of biological role, component of the cytochrome b6-f complex, which mediates electron transfer between photosystem II (PSII) and photosystem I (PSI), cyclic electron flow around PSI, and state transitions. This chain is Cytochrome b6-f complex subunit 7, found in Synechococcus sp. (strain RCC307).